The chain runs to 209 residues: Large ribosomal subunit protein uL3 (209 aa).

The protein belongs to the universal ribosomal protein uL3 family. Part of the 50S ribosomal subunit. Forms a cluster with proteins L14 and L19.

Its function is as follows. One of the primary rRNA binding proteins, it binds directly near the 3'-end of the 23S rRNA, where it nucleates assembly of the 50S subunit. This is Large ribosomal subunit protein uL3 from Lactiplantibacillus plantarum (strain ATCC BAA-793 / NCIMB 8826 / WCFS1) (Lactobacillus plantarum).